The primary structure comprises 301 residues: 4-diphosphocytidyl-2-C-methyl-D-erythritol kinase (301 aa).

K10 is an active-site residue. 96 to 106 (PMGGGVGGGSS) provides a ligand contact to ATP. D138 is an active-site residue.

The protein belongs to the GHMP kinase family. IspE subfamily.

It catalyses the reaction 4-CDP-2-C-methyl-D-erythritol + ATP = 4-CDP-2-C-methyl-D-erythritol 2-phosphate + ADP + H(+). It participates in isoprenoid biosynthesis; isopentenyl diphosphate biosynthesis via DXP pathway; isopentenyl diphosphate from 1-deoxy-D-xylulose 5-phosphate: step 3/6. Functionally, catalyzes the phosphorylation of the position 2 hydroxy group of 4-diphosphocytidyl-2C-methyl-D-erythritol. The protein is 4-diphosphocytidyl-2-C-methyl-D-erythritol kinase of Alcanivorax borkumensis (strain ATCC 700651 / DSM 11573 / NCIMB 13689 / SK2).